A 492-amino-acid chain; its full sequence is Zinc finger protein GLIS2 (492 aa).

The segment at Val-49–Ala-101 is disordered. Residues Pro-69–Gly-129 are transcription activation. The segment covering Ser-82–Pro-97 has biased composition (low complexity). The tract at residues Met-138 to Gln-161 is transcription repression. Residues Leu-158–His-183 form a C2H2-type 1 zinc finger. The C2H2-type 2; degenerate zinc finger occupies Tyr-192–His-219. 3 C2H2-type zinc fingers span residues His-225–His-247, Tyr-253–His-277, and Tyr-283–His-307. A compositionally biased stretch (basic and acidic residues) spans Val-423–Lys-444. The tract at residues Val-423–Ile-450 is disordered.

The protein belongs to the GLI C2H2-type zinc-finger protein family.

The protein resides in the nucleus speckle. It localises to the cytoplasm. In terms of biological role, can act either as a transcription repressor or as a transcription activator, depending on the cell context. May be involved in neuron differentiation. This chain is Zinc finger protein GLIS2 (glis2), found in Xenopus laevis (African clawed frog).